The following is a 651-amino-acid chain: NADH oxidase (651 aa).

FMN is bound at residue Gln-104. Tyr-175 acts as the Proton donor in catalysis. Residues Arg-223 and 320 to 321 (GR) contribute to the FMN site. The [4Fe-4S] cluster site is built by Cys-344, Cys-347, Cys-351, and Cys-364. FAD-binding residues include Ala-396, Glu-415, Gln-423, Lys-433, and Ala-460.

It in the N-terminal section; belongs to the NADH:flavin oxidoreductase/NADH oxidase family. As to quaternary structure, homohexamer. Requires FMN as cofactor. The cofactor is FAD. It depends on [4Fe-4S] cluster as a cofactor. The N-terminus is blocked.

It catalyses the reaction A + NADH + H(+) = AH2 + NAD(+). Functionally, reduces a range of alternative electron acceptors. This chain is NADH oxidase, found in Thermoanaerobacter brockii (Thermoanaerobium brockii).